The following is a 531-amino-acid chain: Squalene epoxidase 1 (531 aa).

A helical membrane pass occupies residues 9-29 (ILPLLISSLLISFVAFYGFFV). FAD contacts are provided by residues 70–71 (VA), 90–91 (ER), R98, R169, V185, D347, and M360. Helical transmembrane passes span 458 to 478 (LVCHFFAVAVYGVIRLLIPFP) and 483 to 503 (IWLGAKLISGASGIIFPIIKA).

The protein belongs to the squalene monooxygenase family. FAD is required as a cofactor. Expressed in seedlings, leaves, stems, inflorescences, sepals, style and siliques. Expressed in expanded cotyledons, root tips and cortical cells of the root elongation zone, but not in root hair cells. In leaves, expressed in most cells, with a very strong expression in stomata.

The protein localises to the membrane. It carries out the reaction squalene + reduced [NADPH--hemoprotein reductase] + O2 = (S)-2,3-epoxysqualene + oxidized [NADPH--hemoprotein reductase] + H2O + H(+). The protein operates within terpene metabolism; lanosterol biosynthesis; lanosterol from farnesyl diphosphate: step 2/3. Its function is as follows. Catalyzes the stereospecific oxidation of squalene to (S)-2,3-epoxysqualene, and is considered to be a rate-limiting enzyme in steroid biosynthesis. Can produce not only oxidosqualene, but also 2,3:22,23-dioxidosqualene. Main squalene epoxidase in the root. Sqe1 mutants may show defects in membrane lipid rafts, impairing the correct localization of RHD2 NADPH oxidase and the proper polarized production of ROS. The sequence is that of Squalene epoxidase 1 (SQE1) from Arabidopsis thaliana (Mouse-ear cress).